A 393-amino-acid polypeptide reads, in one-letter code: Argininosuccinate synthase (393 aa).

ATP contacts are provided by residues 10–18 (AYSGGLDTS) and Ala37. Tyr88 contributes to the L-citrulline binding site. Gly118 serves as a coordination point for ATP. The L-aspartate site is built by Thr120, Asn124, and Asp125. An L-citrulline-binding site is contributed by Asn124. L-citrulline contacts are provided by Arg128, Ser176, Ser185, Glu261, and Tyr273.

It belongs to the argininosuccinate synthase family. Type 1 subfamily. Homotetramer.

Its subcellular location is the cytoplasm. The enzyme catalyses L-citrulline + L-aspartate + ATP = 2-(N(omega)-L-arginino)succinate + AMP + diphosphate + H(+). It functions in the pathway amino-acid biosynthesis; L-arginine biosynthesis; L-arginine from L-ornithine and carbamoyl phosphate: step 2/3. The chain is Argininosuccinate synthase from Carsonella ruddii (strain PV).